A 247-amino-acid polypeptide reads, in one-letter code: Cobalt transport protein CbiM (247 aa).

The N-terminal stretch at 1-21 (MVGWGVLILLMVLWLPRQAYA) is a signal peptide. 7 consecutive transmembrane segments (helical) span residues 27–47 (GYLP…ALIL), 64–84 (LVLA…LPSV), 96–116 (LGAV…ILLF), 119–139 (LLLA…MAVV), 159–179 (GVAV…TTSL), 181–201 (LALA…KFAS), and 202–222 (IFAV…VIMV).

The protein belongs to the CbiM family. In terms of assembly, forms an energy-coupling factor (ECF) transporter complex composed of an ATP-binding protein (A component, CbiO), a transmembrane protein (T component, CbiQ) and 2 possible substrate-capture proteins (S components, CbiM and CbiN) of unknown stoichimetry.

It localises to the cell membrane. It functions in the pathway cofactor biosynthesis; adenosylcobalamin biosynthesis. In terms of biological role, part of the energy-coupling factor (ECF) transporter complex CbiMNOQ involved in cobalt import. This chain is Cobalt transport protein CbiM, found in Kyrpidia tusciae (strain DSM 2912 / NBRC 15312 / T2) (Bacillus tusciae).